The following is a 68-amino-acid chain: Large ribosomal subunit protein bL35 (68 aa).

Belongs to the bacterial ribosomal protein bL35 family.

In Orientia tsutsugamushi (strain Ikeda) (Rickettsia tsutsugamushi), this protein is Large ribosomal subunit protein bL35.